The primary structure comprises 173 residues: Nucleoside-triphosphatase THEP1 (173 aa).

Residues 9-16 (GPPGVGKT) and 97-104 (LYVIDEVG) contribute to the ATP site.

It belongs to the THEP1 NTPase family.

The catalysed reaction is a ribonucleoside 5'-triphosphate + H2O = a ribonucleoside 5'-diphosphate + phosphate + H(+). Has nucleotide phosphatase activity towards ATP, GTP, CTP, TTP and UTP. May hydrolyze nucleoside diphosphates with lower efficiency. This Caldivirga maquilingensis (strain ATCC 700844 / DSM 13496 / JCM 10307 / IC-167) protein is Nucleoside-triphosphatase THEP1.